Here is a 312-residue protein sequence, read N- to C-terminus: Beta-lactamase regulatory protein BlaB (312 aa).

The polypeptide is Beta-lactamase regulatory protein BlaB (blaB) (Streptomyces cacaoi).